The sequence spans 331 residues: ADP-L-glycero-D-manno-heptose-6-epimerase (331 aa).

NADP(+)-binding positions include 11–12 (FI), 32–33 (DN), Lys-39, Lys-54, 75–79 (EGACS), and Asn-92. The active-site Proton acceptor is the Tyr-139. Lys-143 contributes to the NADP(+) binding site. Residue Asn-168 coordinates substrate. NADP(+) contacts are provided by Val-169 and Lys-177. The active-site Proton acceptor is the Lys-177. Substrate is bound by residues Arg-179, His-186, 200–203 (FGEY), Arg-213, and Tyr-292.

The protein belongs to the NAD(P)-dependent epimerase/dehydratase family. HldD subfamily. As to quaternary structure, homopentamer. Requires NADP(+) as cofactor.

It carries out the reaction ADP-D-glycero-beta-D-manno-heptose = ADP-L-glycero-beta-D-manno-heptose. It functions in the pathway nucleotide-sugar biosynthesis; ADP-L-glycero-beta-D-manno-heptose biosynthesis; ADP-L-glycero-beta-D-manno-heptose from D-glycero-beta-D-manno-heptose 7-phosphate: step 4/4. In terms of biological role, catalyzes the interconversion between ADP-D-glycero-beta-D-manno-heptose and ADP-L-glycero-beta-D-manno-heptose via an epimerization at carbon 6 of the heptose. This chain is ADP-L-glycero-D-manno-heptose-6-epimerase, found in Cupriavidus taiwanensis (strain DSM 17343 / BCRC 17206 / CCUG 44338 / CIP 107171 / LMG 19424 / R1) (Ralstonia taiwanensis (strain LMG 19424)).